We begin with the raw amino-acid sequence, 396 residues long: Tryptophan synthase beta chain (396 aa).

An N6-(pyridoxal phosphate)lysine modification is found at Lys88.

This sequence belongs to the TrpB family. In terms of assembly, tetramer of two alpha and two beta chains. Pyridoxal 5'-phosphate serves as cofactor.

It catalyses the reaction (1S,2R)-1-C-(indol-3-yl)glycerol 3-phosphate + L-serine = D-glyceraldehyde 3-phosphate + L-tryptophan + H2O. Its pathway is amino-acid biosynthesis; L-tryptophan biosynthesis; L-tryptophan from chorismate: step 5/5. Its function is as follows. The beta subunit is responsible for the synthesis of L-tryptophan from indole and L-serine. The protein is Tryptophan synthase beta chain of Shewanella baltica (strain OS195).